Consider the following 81-residue polypeptide: Acyl carrier protein 2 (81 aa).

One can recognise a Carrier domain in the interval 1–79 (MTETEILERI…DVIGAVQSLL (79 aa)). O-(pantetheine 4'-phosphoryl)serine is present on S39.

This sequence belongs to the acyl carrier protein (ACP) family. In terms of processing, 4'-phosphopantetheine is transferred from CoA to a specific serine of apo-ACP by AcpS. This modification is essential for activity because fatty acids are bound in thioester linkage to the sulfhydryl of the prosthetic group.

It is found in the cytoplasm. Its pathway is lipid metabolism; fatty acid biosynthesis. Carrier of the growing fatty acid chain in fatty acid biosynthesis. This chain is Acyl carrier protein 2, found in Ralstonia nicotianae (strain ATCC BAA-1114 / GMI1000) (Ralstonia solanacearum).